Consider the following 241-residue polypeptide: Homeobox protein TGIF2LX (241 aa).

2 disordered regions span residues 1 to 58 (MEAA…GNLP) and 125 to 207 (KTGK…ELVS). Residues 10–39 (ETQSPVQKDSPAKTQSPAQDTSIMSRNNAD) are compositionally biased toward polar residues. The homeobox; TALE-type DNA-binding region spans 48-111 (EHKKKRKGNL…INARRRILPD (64 aa)).

It belongs to the TALE/TGIF homeobox family.

It localises to the nucleus. Its function is as follows. May have a transcription role in testis. The chain is Homeobox protein TGIF2LX (TGIF2LX) from Pan troglodytes (Chimpanzee).